We begin with the raw amino-acid sequence, 285 residues long: Energy-coupling factor transporter ATP-binding protein EcfA2 (285 aa).

The ABC transporter domain occupies 6 to 242 (LKVEELNYNY…KEVIRKVNLR (237 aa)). 39–46 (GGNGVGKS) lines the ATP pocket.

The protein belongs to the ABC transporter superfamily. Energy-coupling factor EcfA family. As to quaternary structure, forms a stable energy-coupling factor (ECF) transporter complex composed of 2 membrane-embedded substrate-binding proteins (S component), 2 ATP-binding proteins (A component) and 2 transmembrane proteins (T component).

The protein resides in the cell membrane. In terms of biological role, ATP-binding (A) component of a common energy-coupling factor (ECF) ABC-transporter complex. Unlike classic ABC transporters this ECF transporter provides the energy necessary to transport a number of different substrates. This is Energy-coupling factor transporter ATP-binding protein EcfA2 from Clostridium perfringens (strain SM101 / Type A).